We begin with the raw amino-acid sequence, 492 residues long: Glycylpeptide N-tetradecanoyltransferase (492 aa).

Positions 1-22 are enriched in basic and acidic residues; the sequence is MSDSKDRKGKAPEGQSSEKKDG. Residues 1 to 45 are disordered; that stretch reads MSDSKDRKGKAPEGQSSEKKDGAVNITPQMAESLLENNPALRNET. Residues 82–85, 215–217, and 223–227 each bind tetradecanoyl-CoA; these read YKFW, LCI, and SKRLT. The active-site Proton acceptor; via carboxylate is the Leu-492.

This sequence belongs to the NMT family. As to quaternary structure, monomer.

The protein localises to the cytoplasm. The catalysed reaction is N-terminal glycyl-[protein] + tetradecanoyl-CoA = N-tetradecanoylglycyl-[protein] + CoA + H(+). Functionally, adds a myristoyl group to the N-terminal glycine residue of certain cellular proteins. This Aspergillus fumigatus (strain ATCC MYA-4609 / CBS 101355 / FGSC A1100 / Af293) (Neosartorya fumigata) protein is Glycylpeptide N-tetradecanoyltransferase (nmt1).